Reading from the N-terminus, the 499-residue chain is Na(+)/H(+) antiporter NhaB (499 aa).

12 consecutive transmembrane segments (helical) span residues 38 to 58 (VSPF…LAMA), 62 to 82 (YPLQ…LTSA), 89 to 109 (VLAN…IYFM), 128 to 148 (LLLS…LDAL), 149 to 169 (TVTA…HRFA), 204 to 224 (LIMH…VGEP), 242 to 262 (LVMA…CAIL), 310 to 330 (VLVF…LLII), 349 to 369 (FEEA…VAVI), 393 to 413 (MFFV…VATV), 449 to 469 (ATPN…APLI), and 478 to 498 (IMAL…VILF).

Belongs to the NhaB Na(+)/H(+) (TC 2.A.34) antiporter family.

The protein resides in the cell inner membrane. The catalysed reaction is 2 Na(+)(in) + 3 H(+)(out) = 2 Na(+)(out) + 3 H(+)(in). Na(+)/H(+) antiporter that extrudes sodium in exchange for external protons. This chain is Na(+)/H(+) antiporter NhaB, found in Saccharophagus degradans (strain 2-40 / ATCC 43961 / DSM 17024).